A 193-amino-acid chain; its full sequence is Imidazoleglycerol-phosphate dehydratase (193 aa).

It belongs to the imidazoleglycerol-phosphate dehydratase family.

The protein resides in the cytoplasm. The enzyme catalyses D-erythro-1-(imidazol-4-yl)glycerol 3-phosphate = 3-(imidazol-4-yl)-2-oxopropyl phosphate + H2O. It participates in amino-acid biosynthesis; L-histidine biosynthesis; L-histidine from 5-phospho-alpha-D-ribose 1-diphosphate: step 6/9. The polypeptide is Imidazoleglycerol-phosphate dehydratase (Methanospirillum hungatei JF-1 (strain ATCC 27890 / DSM 864 / NBRC 100397 / JF-1)).